The sequence spans 139 residues: Large ribosomal subunit protein uL16 (139 aa).

Over residues 1–17 the composition is skewed to basic residues; sequence MLMPKRVKYRKSQRGRM. Residues 1–24 form a disordered region; that stretch reads MLMPKRVKYRKSQRGRMKGNSGRG.

It belongs to the universal ribosomal protein uL16 family. Part of the 50S ribosomal subunit.

In terms of biological role, binds 23S rRNA and is also seen to make contacts with the A and possibly P site tRNAs. The chain is Large ribosomal subunit protein uL16 from Chlorobium limicola (strain DSM 245 / NBRC 103803 / 6330).